The primary structure comprises 335 residues: GTPase Obg (335 aa).

In terms of domain architecture, Obg spans 1–159; the sequence is MQFIDRSEIE…RKLLLELKLL (159 aa). The region spanning 160–328 is the OBG-type G domain; it reads AEVGIIGLPN…LLARVWQVLE (169 aa). Residues 166-173, 191-195, 213-216, 280-283, and 309-311 contribute to the GTP site; these read GLPNAGKS, FTTLV, DIPG, NKAD, and SAA. Positions 173 and 193 each coordinate Mg(2+).

This sequence belongs to the TRAFAC class OBG-HflX-like GTPase superfamily. OBG GTPase family. In terms of assembly, monomer. The cofactor is Mg(2+).

The protein localises to the cytoplasm. Its function is as follows. An essential GTPase which binds GTP, GDP and possibly (p)ppGpp with moderate affinity, with high nucleotide exchange rates and a fairly low GTP hydrolysis rate. Plays a role in control of the cell cycle, stress response, ribosome biogenesis and in those bacteria that undergo differentiation, in morphogenesis control. This chain is GTPase Obg, found in Gloeobacter violaceus (strain ATCC 29082 / PCC 7421).